The following is a 328-amino-acid chain: MIFSILEHILTHISFSVVSIVLIIYFLTLLVNLDEIIGFFNSSDKGIIITFFGITGLLLTRWIFSGHFPLSNLYESLIFLSWAFSIIHMVSYFNKKQQNHLNAITAPSAIFIQGFATSGLLNKMPQSAILVPALQSQWLMMHVSMMILGYGALLCGSLLSIALLVITFRKVGPTFWKKNIKKNVLLNELFSFDVLYYINERNSILLQQNINFSFSRNYYRYQLIQQLDYWSFRIISLGFIFLTVGILSGAVWANETWGSYWNWDPKETWAFITWTIFAIYLHIKTNRNVRGINSAIVASIGFLLIWICYFGVNLLGIGLHSYGSFTSN.

The next 8 membrane-spanning stretches (helical) occupy residues 13–33 (ISFS…LVNL), 46–66 (GIII…IFSG), 73–93 (LYES…VSYF), 101–121 (LNAI…SGLL), 146–166 (MILG…LLVI), 234–254 (IISL…VWAN), 263–283 (WDPK…YLHI), and 295–315 (AIVA…VNLL).

It belongs to the CcmF/CycK/Ccl1/NrfE/CcsA family. May interact with Ccs1.

The protein localises to the plastid. It is found in the chloroplast thylakoid membrane. Functionally, required during biogenesis of c-type cytochromes (cytochrome c6 and cytochrome f) at the step of heme attachment. The chain is Cytochrome c biogenesis protein CcsA from Olimarabidopsis pumila (Dwarf rocket).